The primary structure comprises 2828 residues: Matrix-remodeling-associated protein 5 (2828 aa).

The signal sequence occupies residues methionine 1–alanine 26. The LRRNT domain maps to cysteine 27–lysine 55. 6 LRR repeats span residues histidine 56–glycine 77, lysine 80–aspartate 101, serine 104–glycine 125, asparagine 128–glycine 149, serine 152–threonine 173, and threonine 184–asparagine 205. The region spanning asparagine 217 to lysine 277 is the LRRCT domain. 2 N-linked (GlcNAc...) asparagine glycosylation sites follow: asparagine 287 and asparagine 321. 2 consecutive Ig-like C2-type domains span residues proline 481–leucine 571 and proline 575–threonine 669. Disulfide bonds link cysteine 501–cysteine 555 and cysteine 599–cysteine 651. An N-linked (GlcNAc...) asparagine glycan is attached at asparagine 633. Disordered stretches follow at residues lysine 671–leucine 715, lysine 933–proline 962, glutamine 1068–isoleucine 1190, alanine 1204–threonine 1275, and glutamate 1367–glycine 1389. Over residues isoleucine 695–glutamate 708 the composition is skewed to acidic residues. Serine 702 is a glycosylation site (O-linked (Xyl...) (chondroitin sulfate) serine). Low complexity predominate over residues serine 951–proline 962. Residues serine 1090–serine 1107 show a composition bias toward polar residues. A compositionally biased stretch (basic residues) spans proline 1146–glutamine 1168. Composition is skewed to polar residues over residues threonine 1169–isoleucine 1190 and alanine 1204–lysine 1214. The span at threonine 1229–tyrosine 1243 shows a compositional bias: basic residues. N-linked (GlcNAc...) asparagine glycosylation is present at asparagine 1403. One copy of the LRR 7 repeat lies at leucine 1410–glutamine 1434. 5 disordered regions span residues glutamine 1479 to isoleucine 1499, asparagine 1536 to aspartate 1566, glutamine 1579 to histidine 1603, serine 1669 to aspartate 1689, and lysine 1700 to serine 1719. A compositionally biased stretch (polar residues) spans threonine 1542–aspartate 1566. A glycan (N-linked (GlcNAc...) asparagine) is linked at asparagine 1735. 10 consecutive Ig-like C2-type domains span residues proline 1853 to threonine 1946, proline 1950 to histidine 2041, proline 2046 to glutamine 2140, alanine 2146 to valine 2239, proline 2242 to threonine 2343, proline 2345 to tryptophan 2432, proline 2440 to threonine 2534, proline 2542 to serine 2630, proline 2637 to threonine 2722, and proline 2733 to phenylalanine 2828. 2 disulfides stabilise this stretch: cysteine 1875–cysteine 1928 and cysteine 1972–cysteine 2025. Residues asparagine 2007 and asparagine 2056 are each glycosylated (N-linked (GlcNAc...) asparagine). Cystine bridges form between cysteine 2069-cysteine 2122, cysteine 2168-cysteine 2221, cysteine 2265-cysteine 2324, cysteine 2368-cysteine 2418, cysteine 2466-cysteine 2518, cysteine 2564-cysteine 2616, cysteine 2659-cysteine 2711, and cysteine 2755-cysteine 2810. The N-linked (GlcNAc...) asparagine glycan is linked to asparagine 2693.

In terms of tissue distribution, detected in placenta (at protein level). Detected in cerebrospinal fluid and fibroblasts (at protein level). Highly expressed in kidney, also detected on liver and spleen. Expressed by proximal tubular cells of the kidney (at protein level). Expression highly increases during chronic kidney disease and autosomal dominant polycystic kidney disease, where is detected in cysts.

It is found in the secreted. In terms of biological role, in kidney, has anti-inflammatory and anti-fibrotic properties by limiting the induction of chemokines, fibronectin and collagen expression in response to TGB1 and pro-inflammatory stimuli. In Homo sapiens (Human), this protein is Matrix-remodeling-associated protein 5 (MXRA5).